Here is a 252-residue protein sequence, read N- to C-terminus: MNIQLICETENSQNFTALCKEKGLTHDPASVLALVQTETDGEVRLELRKLDEPKLGAVYVDFVAGTMAHRRKFGGGRGEAIAKAVGVKGNELPSVIDATAGLGRDAFVLASIGCRVRLVERHPVVYLLLQDGLRRAYADPEIGEMMQKNMQLLPVHHITELNPFEDFADVVYLDPMYPHKQKSALVKKEMRVFQYLVGADSDSNLLLEPALKLAKKRVVVKRPDYAEFLAEKAPQFSRETKNHRFDIYSVNV.

S-adenosyl-L-methionine contacts are provided by residues 104–105, 120–121, and Asp174; these read RD and ER.

This sequence belongs to the methyltransferase superfamily. RsmJ family.

The protein localises to the cytoplasm. The catalysed reaction is guanosine(1516) in 16S rRNA + S-adenosyl-L-methionine = N(2)-methylguanosine(1516) in 16S rRNA + S-adenosyl-L-homocysteine + H(+). Functionally, specifically methylates the guanosine in position 1516 of 16S rRNA. The protein is Ribosomal RNA small subunit methyltransferase J of Mannheimia succiniciproducens (strain KCTC 0769BP / MBEL55E).